The following is a 136-amino-acid chain: MMQPKRMKFRKMFKGRNRGLSKGTEVSFGEFGLKAVGRGRITARQIEAARRAMTRHVKRQGKIWIRVFPDKPITGKPLEVRQGKGKGNVEYYVAQTQPGKVLYEMEGVPEKLAREAFALAAAKLPLATTFVTRKVM.

It belongs to the universal ribosomal protein uL16 family. In terms of assembly, part of the 50S ribosomal subunit.

Functionally, binds 23S rRNA and is also seen to make contacts with the A and possibly P site tRNAs. The sequence is that of Large ribosomal subunit protein uL16 from Psychromonas ingrahamii (strain DSM 17664 / CCUG 51855 / 37).